The following is a 752-amino-acid chain: Mitochondrial Rho GTPase 1 (752 aa).

Residues 1–671 are Cytoplasmic-facing; the sequence is MRKDVRIVLA…RNALSYGTNR (671 aa). The Miro 1 domain maps to 2 to 170; it reads RKDVRIVLAG…FYFAQKAVLY (169 aa). Residues 11–18, 57–61, and 115–118 each bind GTP; these read GDPDVGKS, DTSSS, and NKID. EF-hand domains follow at residues 186-221 and 333-368; these read ACVDALKRIFRLCDSDKDGLLSDGELNDFQRKCFDT and NGYQFLTDIFEVHDKDRDGALSEEELDSLFITAPDN. Residues Asp-199, Asp-201, Asp-203, Glu-210, Asp-346, Asp-348, Asp-350, and Glu-357 each contribute to the Ca(2+) site. Residues 426–460 form a disordered region; that stretch reads SSGSASTPAPIPLTPTGPPGSRPSRNRTPCPPSTI. The span at 434 to 446 shows a compositional bias: pro residues; the sequence is APIPLTPTGPPGS. The Miro 2 domain occupies 481–651; that stretch reads RSVFLGFVLG…YGLICTIAVD (171 aa). GTP is bound by residues 490–497, 526–530, and 595–598; these read GAAGSGKT, EQAGA, and TKAD. A helical; Anchor for type IV membrane protein transmembrane segment spans residues 672 to 692; the sequence is WQFWGYIGLVVIGGGGAVWIC. Over 693–752 the chain is Mitochondrial intermembrane; the sequence is AKVLKVPIGSTLGFGSSASTTSWWLSGAQARGAGGPNATKVSSWFDWIRWQSSSNVRSEL.

This sequence belongs to the mitochondrial Rho GTPase family.

It localises to the mitochondrion outer membrane. In terms of biological role, mitochondrial GTPase involved in mitochondrial trafficking. Probably involved in control of anterograde transport of mitochondria and their subcellular distribution. In Mycosarcoma maydis (Corn smut fungus), this protein is Mitochondrial Rho GTPase 1 (GEM1).